Here is a 148-residue protein sequence, read N- to C-terminus: Deoxyuridine 5'-triphosphate nucleotidohydrolase (148 aa).

Substrate-binding positions include 65-67, N78, 82-84, and K92; these read RSG and TID.

Belongs to the dUTPase family. The cofactor is Mg(2+).

It carries out the reaction dUTP + H2O = dUMP + diphosphate + H(+). It participates in pyrimidine metabolism; dUMP biosynthesis; dUMP from dCTP (dUTP route): step 2/2. This enzyme is involved in nucleotide metabolism: it produces dUMP, the immediate precursor of thymidine nucleotides and it decreases the intracellular concentration of dUTP so that uracil cannot be incorporated into DNA. This Chlorobium phaeovibrioides (strain DSM 265 / 1930) (Prosthecochloris vibrioformis (strain DSM 265)) protein is Deoxyuridine 5'-triphosphate nucleotidohydrolase.